A 283-amino-acid polypeptide reads, in one-letter code: Putative transposase InsK for insertion sequence element IS150 (283 aa).

Residues 117–279 enclose the Integrase catalytic domain; that stretch reads KATRPNEKWV…TPIEYRNQTY (163 aa).

It belongs to the transposase IS3/IS150/IS904 family.

Its function is as follows. Involved in the transposition of the insertion sequence IS150. This Escherichia coli (strain K12) protein is Putative transposase InsK for insertion sequence element IS150 (insK).